The chain runs to 344 residues: S-adenosylmethionine:tRNA ribosyltransferase-isomerase (344 aa).

The protein belongs to the QueA family. In terms of assembly, monomer.

It is found in the cytoplasm. The enzyme catalyses 7-aminomethyl-7-carbaguanosine(34) in tRNA + S-adenosyl-L-methionine = epoxyqueuosine(34) in tRNA + adenine + L-methionine + 2 H(+). It participates in tRNA modification; tRNA-queuosine biosynthesis. Functionally, transfers and isomerizes the ribose moiety from AdoMet to the 7-aminomethyl group of 7-deazaguanine (preQ1-tRNA) to give epoxyqueuosine (oQ-tRNA). This is S-adenosylmethionine:tRNA ribosyltransferase-isomerase from Nitrosococcus oceani (strain ATCC 19707 / BCRC 17464 / JCM 30415 / NCIMB 11848 / C-107).